We begin with the raw amino-acid sequence, 351 residues long: Beta-hexosaminidase (351 aa).

Substrate-binding positions include Asp62, Arg70, Arg134, and 164–165; that span reads KH. Catalysis depends on His177, which acts as the Proton donor/acceptor. Asp249 serves as the catalytic Nucleophile.

Belongs to the glycosyl hydrolase 3 family. NagZ subfamily.

It is found in the cytoplasm. It catalyses the reaction Hydrolysis of terminal non-reducing N-acetyl-D-hexosamine residues in N-acetyl-beta-D-hexosaminides.. It functions in the pathway cell wall biogenesis; peptidoglycan recycling. Its function is as follows. Plays a role in peptidoglycan recycling by cleaving the terminal beta-1,4-linked N-acetylglucosamine (GlcNAc) from peptide-linked peptidoglycan fragments, giving rise to free GlcNAc, anhydro-N-acetylmuramic acid and anhydro-N-acetylmuramic acid-linked peptides. The sequence is that of Beta-hexosaminidase from Histophilus somni (strain 129Pt) (Haemophilus somnus).